The sequence spans 145 residues: Large-conductance mechanosensitive channel (145 aa).

The next 2 helical transmembrane spans lie at 30 to 50 (VAVV…AWLM) and 74 to 94 (GELV…FLII).

This sequence belongs to the MscL family. Homopentamer.

It localises to the cell inner membrane. Its function is as follows. Channel that opens in response to stretch forces in the membrane lipid bilayer. May participate in the regulation of osmotic pressure changes within the cell. This chain is Large-conductance mechanosensitive channel, found in Synechocystis sp. (strain ATCC 27184 / PCC 6803 / Kazusa).